The primary structure comprises 229 residues: Homeobox-leucine zipper protein HOX3 (229 aa).

The disordered stretch occupies residues Met-1 to Leu-82. A compositionally biased stretch (acidic residues) spans Gly-52–Glu-68. The homeobox DNA-binding region spans His-75–Gln-134. The leucine-zipper stretch occupies residues Lys-133 to His-177. The interval Ala-198–Phe-229 is disordered.

This sequence belongs to the HD-ZIP homeobox family. Class II subfamily. In terms of assembly, homodimer. May form a heterodimer with HOX1, HOX2 or HOX7. Expressed in seedlings, roots, leaves, nodes, internodes, flowers and embryo.

The protein resides in the nucleus. Its function is as follows. Probable transcription repressor that binds to the DNA sequence 5'-CAAT[GC]ATTG-3'. This is Homeobox-leucine zipper protein HOX3 (HOX3) from Oryza sativa subsp. indica (Rice).